The chain runs to 830 residues: DNA replication licensing factor mcm2 (830 aa).

The interval 1 to 45 (MDSFRKRGRRDSESLPFESENSSLGATPLSLPPSSPPPEFSDEAA) is disordered. Pro residues predominate over residues 30 to 39 (SLPPSSPPPE). The C4-type zinc-finger motif lies at 334-360 (CTKCGATLGPFFQDSSVEVKISFCHNC). Residues 484 to 691 (IHNRIIASMA…IDEQLANFVV (208 aa)) form the MCM domain. Residue 534–541 (GDPGTAKS) coordinates ATP. Positions 666-669 (SRFD) match the Arginine finger motif.

This sequence belongs to the MCM family. Component of the mcm2-7 complex. The complex forms a toroidal hexameric ring with the proposed subunit order mcm2-mcm6-mcm4-mcm7-mcm3-mcm5. The heterodimers of mcm4/mcm6 and mcm3/mcm5 interact with mcm2 and mcm7. Interacts with mcm10.

It is found in the nucleus. It carries out the reaction ATP + H2O = ADP + phosphate + H(+). Its function is as follows. Acts as a component of the mcm2-7 complex (mcm complex) which is the putative replicative helicase essential for 'once per cell cycle' DNA replication initiation and elongation in eukaryotic cells. The active ATPase sites in the mcm2-7 ring are formed through the interaction surfaces of two neighboring subunits such that a critical structure of a conserved arginine finger motif is provided in trans relative to the ATP-binding site of the Walker A box of the adjacent subunit. The six ATPase active sites, however, are likely to contribute differentially to the complex helicase activity. Plays an important role in DNA replication. In Schizosaccharomyces pombe (strain 972 / ATCC 24843) (Fission yeast), this protein is DNA replication licensing factor mcm2 (mcm2).